The following is a 212-amino-acid chain: Uracil phosphoribosyltransferase (212 aa).

Residues Arg78, Arg103, and 130-138 (DPMLATGSS) contribute to the 5-phospho-alpha-D-ribose 1-diphosphate site. Uracil is bound by residues Ile193 and 198-200 (GDA). Asp199 provides a ligand contact to 5-phospho-alpha-D-ribose 1-diphosphate.

It belongs to the UPRTase family. It depends on Mg(2+) as a cofactor.

The enzyme catalyses UMP + diphosphate = 5-phospho-alpha-D-ribose 1-diphosphate + uracil. The protein operates within pyrimidine metabolism; UMP biosynthesis via salvage pathway; UMP from uracil: step 1/1. Allosterically activated by GTP. Its function is as follows. Catalyzes the conversion of uracil and 5-phospho-alpha-D-ribose 1-diphosphate (PRPP) to UMP and diphosphate. The polypeptide is Uracil phosphoribosyltransferase (Pseudomonas fluorescens (strain SBW25)).